A 1375-amino-acid polypeptide reads, in one-letter code: DNA-directed RNA polymerase subunit beta (1375 aa).

It belongs to the RNA polymerase beta chain family. In terms of assembly, the RNAP catalytic core consists of 2 alpha, 1 beta, 1 beta' and 1 omega subunit. When a sigma factor is associated with the core the holoenzyme is formed, which can initiate transcription.

It carries out the reaction RNA(n) + a ribonucleoside 5'-triphosphate = RNA(n+1) + diphosphate. Its function is as follows. DNA-dependent RNA polymerase catalyzes the transcription of DNA into RNA using the four ribonucleoside triphosphates as substrates. The chain is DNA-directed RNA polymerase subunit beta from Oleidesulfovibrio alaskensis (strain ATCC BAA-1058 / DSM 17464 / G20) (Desulfovibrio alaskensis).